A 203-amino-acid polypeptide reads, in one-letter code: Early nodulin-like protein 9 (203 aa).

The signal sequence occupies residues 1–27; sequence MARNLKSMMLCGFGLLCFLMIVDRAYA. The Phytocyanin domain maps to 28-130; sequence REFTVGGATG…NEKLVVIVMA (103 aa). A disulfide bond links Cys84 and Cys118. N-linked (GlcNAc...) asparagine glycosylation is present at Asn103. The disordered stretch occupies residues 134–181; that stretch reads GNKNTASSPPSPAPAPSGESAPSPPVSGTFEMTPAPTPTTSEDTPNSA. Residue Ser180 is the site of GPI-anchor amidated serine attachment. Residues 181–203 constitute a propeptide, removed in mature form; sequence AASSLSFVAALLGAALASTLFLH.

Belongs to the early nodulin-like (ENODL) family. In terms of tissue distribution, specifically observed at the plasma membrane of sieve elements in vascular tissues of leaves, stems, roots, flowers and reproductive organs. Absent from companion cells.

Its subcellular location is the cell membrane. In terms of biological role, may act as a carbohydrate transporter. Mainly required for reproductive functions. This Arabidopsis thaliana (Mouse-ear cress) protein is Early nodulin-like protein 9.